Here is a 485-residue protein sequence, read N- to C-terminus: ATP synthase subunit beta, cyanelle (485 aa).

Gly-162 to Thr-169 is a binding site for ATP.

It belongs to the ATPase alpha/beta chains family. F-type ATPases have 2 components, CF(1) - the catalytic core - and CF(0) - the membrane proton channel. CF(1) has five subunits: alpha(3), beta(3), gamma(1), delta(1), epsilon(1). CF(0) has four main subunits: a(1), b(1), b'(1) and c(9-12).

The protein localises to the plastid. It is found in the cyanelle thylakoid membrane. It carries out the reaction ATP + H2O + 4 H(+)(in) = ADP + phosphate + 5 H(+)(out). In terms of biological role, produces ATP from ADP in the presence of a proton gradient across the membrane. The catalytic sites are hosted primarily by the beta subunits. The polypeptide is ATP synthase subunit beta, cyanelle (Cyanophora paradoxa).